We begin with the raw amino-acid sequence, 254 residues long: MAQIAPLRVQLIAKTEFLAPPDVSWTTDADGGSALVEFAGRACYQSWSKPNPRTATNAAYIKHIIDVGHVAVLEHASVSFYISGISRSCTHELIRHRHFSYSQLSQRYVPEKDAQVVVPPDMEDDDELQQILIAAVEASRATYTELLVKLNAKLMAGELGGNRAVLRRKQARQAAHAVLPNANETRIVVTGNYRAWRHFIAMRASEHADVEIRRLAIVCLRRLVDVAPAVFADFEITALADGTEVATSPLATEA.

The region spanning 7–237 is the ThyX domain; sequence LRVQLIAKTE…PAVFADFEIT (231 aa). DUMP contacts are provided by residues 92 to 95, 103 to 107, and His176; these read ELIR and QLSQR. FAD-binding positions include 95 to 97 and Gln103; that span reads RHR. The short motif at 95–105 is the ThyX motif element; sequence RHRHFSYSQLS. FAD-binding positions include 192–194 and His198; that span reads NYR. Arg203 is a dUMP binding site. Catalysis depends on Arg203, which acts as the Involved in ionization of N3 of dUMP, leading to its activation.

Belongs to the thymidylate synthase ThyX family. Homotetramer. FAD is required as a cofactor.

The catalysed reaction is dUMP + (6R)-5,10-methylene-5,6,7,8-tetrahydrofolate + NADPH + H(+) = dTMP + (6S)-5,6,7,8-tetrahydrofolate + NADP(+). It participates in pyrimidine metabolism; dTTP biosynthesis. Catalyzes the reductive methylation of 2'-deoxyuridine-5'-monophosphate (dUMP) to 2'-deoxythymidine-5'-monophosphate (dTMP) while utilizing 5,10-methylenetetrahydrofolate (mTHF) as the methyl donor, and NADPH and FADH(2) as the reductant. The polypeptide is Flavin-dependent thymidylate synthase (Mycobacterium leprae (strain Br4923)).